Here is a 103-residue protein sequence, read N- to C-terminus: Histone H4 (103 aa).

The segment covering 1–14 (MTGRGKGGKGLGKG) has biased composition (gly residues). The tract at residues 1 to 20 (MTGRGKGGKGLGKGGAKRHR) is disordered. 2 positions are modified to N6-acetyl-N6-methyllysine; alternate: Lys6 and Lys13. A DNA-binding region spans residues 17–21 (KRHRK).

This sequence belongs to the histone H4 family. As to quaternary structure, the nucleosome is a histone octamer containing two molecules each of H2A, H2B, H3 and H4 assembled in one H3-H4 heterotetramer and two H2A-H2B heterodimers. The octamer wraps approximately 147 bp of DNA.

Its subcellular location is the nucleus. It is found in the chromosome. Functionally, core component of nucleosome. Nucleosomes wrap and compact DNA into chromatin, limiting DNA accessibility to the cellular machineries which require DNA as a template. Histones thereby play a central role in transcription regulation, DNA repair, DNA replication and chromosomal stability. DNA accessibility is regulated via a complex set of post-translational modifications of histones, also called histone code, and nucleosome remodeling. This chain is Histone H4, found in Trichogramma cacaeciae (Moth egg parasite).